Here is a 329-residue protein sequence, read N- to C-terminus: Taste receptor type 2 member 134 (329 aa).

Residues 1–27 (MRCSLRGCVQGRGGKSGVSLSKFSPKK) are Extracellular-facing. A helical membrane pass occupies residues 28–48 (MSFFFIFMVIFCIQSLVALLQ). The Cytoplasmic portion of the chain corresponds to 49-68 (NGFLATVLGREWVRSQGLPA). A helical transmembrane segment spans residues 69–89 (GDMIVACLAASRFCLHGVAIV). Over 90-121 (NNFLTFVKLWSQKIYFSVLWDFVNTVNFWCTT) the chain is Extracellular. Residues 122–142 (WLAIFYCVKISSFSHPIFFWI) form a helical membrane-spanning segment. Residues 143–153 (KWRISRSVPRL) lie on the Cytoplasmic side of the membrane. A helical membrane pass occupies residues 154-174 (LLGSLVIGGLSAVSSATGNTI). Residues 175–201 (AFQMTACENYTLAYRTRAFYAYYFRCH) are Extracellular-facing. The N-linked (GlcNAc...) asparagine glycan is linked to N183. The chain crosses the membrane as a helical span at residues 202 to 222 (AMLMWIIPFFLFLLSVILLMF). At 223–251 (SLYRHLEHMRYRRPWSHDYSTQAHTMALK) the chain is on the cytoplasmic side. Residues 252 to 272 (SLAFFLVFYTSYVLFLVISVT) form a helical membrane-spanning segment. At 273–282 (RVVNVHSSWH) the chain is on the extracellular side. The helical transmembrane segment at 283–303 (WAWEVITYMGILLHSTILTLS) threads the bilayer. Over 304 to 329 (NPKMRKALKIKFPDLCVARSQDKRRG) the chain is Cytoplasmic.

The protein belongs to the G-protein coupled receptor T2R family. In terms of tissue distribution, expressed in tongue and gastrointestinal tract.

Its subcellular location is the membrane. Functionally, putative taste receptor which may play a role in the perception of bitterness. This chain is Taste receptor type 2 member 134, found in Rattus norvegicus (Rat).